Consider the following 550-residue polypeptide: Centrosomal and chromosomal factor (550 aa).

Coiled-coil stretches lie at residues 20–44 (SALSALQQQQQQQQQQHSQTQQQHH), 105–126 (VANSRQQQQQQQQQQQQQQQQQ), and 239–274 (ATSAQQQQQQQQRYQQQQQQLRQQHQQMSQMSQQAH). 4 disordered regions span residues 21–145 (ALSA…KDYS), 208–320 (LSSG…HAAN), 361–380 (SHYAAKGSGGGAGGGKRDAM), and 392–465 (SGKL…SASV). Low complexity-rich tracts occupy residues 24–71 (ALQQ…QQQQ), 81–136 (ANTS…NAAP), and 221–320 (AAVA…HAAN). Low complexity-rich tracts occupy residues 396-412 (QQSQVQQQQPQQQQQHC) and 450-462 (SATPTAGAASGGS).

Homodimer. Interacts with esc, Trl, E(z), scm and ph-p in vitro. Found in vivo in an esc-containing complex, which may be the Esc/E(z) complex. Also found in vivo in a Pc-containing complex that may be the PRC1 complex, but does not interact with Pc directly. Interacts with cyclin CycG.

The protein resides in the nucleus. The protein localises to the cytoplasm. Its subcellular location is the cytoskeleton. It localises to the microtubule organizing center. It is found in the centrosome. The protein resides in the chromosome. Functionally, essential protein required for proper condensation of mitotic chromosomes and progression through mitosis. Binds to specific polytene chromosome sites, many of which are shared with the posterior sex combs (Psc) protein. Involved in maintaining Abd-B repression outside its normal expression domain. The chain is Centrosomal and chromosomal factor (corto) from Drosophila melanogaster (Fruit fly).